The primary structure comprises 259 residues: Energy-coupling factor transporter ATP-binding protein EcfA1 (259 aa).

In terms of domain architecture, ABC transporter spans 3 to 230; it reads ITLNSVSFRY…EFDDVEIPFK (228 aa). Residue 38 to 43 participates in ATP binding; it reads GSGKTT. The Proton acceptor role is filled by Glu157.

It belongs to the ABC transporter superfamily. Energy-coupling factor EcfA family. In terms of assembly, forms a heterodimer with EcfA2. Forms a stable energy-coupling factor (ECF) transporter complex composed of 2 membrane-embedded substrate-binding proteins (S component, RibU, BioY), 2 ATP-binding proteins (A component) and 2 transmembrane proteins (T component) upon coexpression in E.coli. Stable subcomplexes with both A plus T components can also be isolated. This complex interacts with at least 2 substrate-specific components, BioY and RibU.

It localises to the cell inner membrane. In terms of biological role, ATP-binding (A) component of a common energy-coupling factor (ECF) ABC-transporter complex. Unlike classic ABC transporters this ECF transporter provides the energy necessary to transport a number of different substrates. Expression of the complex plus RibU in E.coli allows riboflavin uptake; uptake does not occur in the absence of RibU or the EcfA1A2T complex. This Thermotoga maritima (strain ATCC 43589 / DSM 3109 / JCM 10099 / NBRC 100826 / MSB8) protein is Energy-coupling factor transporter ATP-binding protein EcfA1.